Consider the following 558-residue polypeptide: Formate--tetrahydrofolate ligase (558 aa).

66–73 (TPAGEGKT) lines the ATP pocket.

The protein belongs to the formate--tetrahydrofolate ligase family.

It carries out the reaction (6S)-5,6,7,8-tetrahydrofolate + formate + ATP = (6R)-10-formyltetrahydrofolate + ADP + phosphate. It participates in one-carbon metabolism; tetrahydrofolate interconversion. The chain is Formate--tetrahydrofolate ligase from Clostridioides difficile (strain 630) (Peptoclostridium difficile).